The following is a 376-amino-acid chain: Cytoplasmic tRNA 2-thiolation protein 2 (376 aa).

The protein belongs to the CTU2/NCS2 family.

Its subcellular location is the cytoplasm. Its pathway is tRNA modification; 5-methoxycarbonylmethyl-2-thiouridine-tRNA biosynthesis. In terms of biological role, plays a central role in 2-thiolation of mcm(5)S(2)U at tRNA wobble positions of tRNA(Lys), tRNA(Glu) and tRNA(Gln). May act by forming a heterodimer with NCS6 that ligates sulfur from thiocarboxylated URM1 onto the uridine of tRNAs at wobble position. Prior mcm(5) tRNA modification by the elongator complex is required for 2-thiolation. May also be involved in protein urmylation. The polypeptide is Cytoplasmic tRNA 2-thiolation protein 2 (Coccidioides immitis (strain RS) (Valley fever fungus)).